A 477-amino-acid polypeptide reads, in one-letter code: RTX-I toxin determinant D (477 aa).

The Cytoplasmic portion of the chain corresponds to methionine 1–leucine 59. A helical transmembrane segment spans residues isoleucine 60 to valine 80. Topologically, residues glutamate 81–arginine 477 are periplasmic.

Belongs to the membrane fusion protein (MFP) (TC 8.A.1) family.

Its subcellular location is the cell inner membrane. Functionally, involved in the transport of the toxin RTX-I as well as that of RTX-II. The chain is RTX-I toxin determinant D (apxID) from Actinobacillus pleuropneumoniae (Haemophilus pleuropneumoniae).